Consider the following 168-residue polypeptide: DNA damage-inducible transcript 3 protein (168 aa).

The interaction with TRIB3 stretch occupies residues 10-18; that stretch reads FGALSSWEL. Positions 10-26 are N-terminal; that stretch reads FGALSSWELEAWYEDLQ. Residues serine 14, serine 15, serine 30, and serine 31 each carry the phosphoserine; by CK2 modification. The interval 31 to 141 is disordered; that stretch reads SDENRGTCVS…QLAEENERLK (111 aa). Residues 76-90 are compositionally biased toward low complexity; it reads SQSPCSPESSQSSLA. Phosphoserine; by MAPK14 is present on residues serine 78 and serine 81. In terms of domain architecture, bZIP spans 98–161; it reads QGRTRKRKQS…EATRRALIDR (64 aa). The tract at residues 100–129 is basic motif; that stretch reads RTRKRKQSGQSPARAGKQRMKEKEQENERK. The segment covering 118 to 141 has biased composition (basic and acidic residues); sequence RMKEKEQENERKVAQLAEENERLK. The leucine-zipper stretch occupies residues 133–147; that stretch reads LAEENERLKQEIERL.

The protein belongs to the bZIP family. As to quaternary structure, heterodimer. Interacts with TCF7L2/TCF4, EP300/P300, HDAC1, HDAC5 and HDAC6. Interacts with TRIB3 which blocks its association with EP300/P300. Interacts with FOXO3, CEBPB and ATF4. Post-translationally, ubiquitinated, leading to its degradation by the proteasome. In terms of processing, phosphorylation at serine residues by MAPK14 enhances its transcriptional activation activity while phosphorylation at serine residues by CK2 inhibits its transcriptional activation activity.

Its subcellular location is the cytoplasm. It localises to the nucleus. Functionally, multifunctional transcription factor in ER stress response. Plays an essential role in the response to a wide variety of cell stresses and induces cell cycle arrest and apoptosis in response to ER stress. Plays a dual role both as an inhibitor of CCAAT/enhancer-binding protein (C/EBP) function and as an activator of other genes. Acts as a dominant-negative regulator of C/EBP-induced transcription: dimerizes with members of the C/EBP family, impairs their association with C/EBP binding sites in the promoter regions, and inhibits the expression of C/EBP regulated genes. Positively regulates the transcription of TRIB3, IL6, IL8, IL23, TNFRSF10B/DR5, PPP1R15A/GADD34, BBC3/PUMA, BCL2L11/BIM and ERO1L. Negatively regulates; expression of BCL2 and MYOD1, ATF4-dependent transcriptional activation of asparagine synthetase (ASNS), CEBPA-dependent transcriptional activation of hepcidin (HAMP) and CEBPB-mediated expression of peroxisome proliferator-activated receptor gamma (PPARG). Inhibits the canonical Wnt signaling pathway by binding to TCF7L2/TCF4, impairing its DNA-binding properties and repressing its transcriptional activity. Plays a regulatory role in the inflammatory response through the induction of caspase-11 (CASP4/CASP11) which induces the activation of caspase-1 (CASP1) and both these caspases increase the activation of pro-IL1B to mature IL1B which is involved in the inflammatory response. The sequence is that of DNA damage-inducible transcript 3 protein (DDIT3) from Bos taurus (Bovine).